Reading from the N-terminus, the 94-residue chain is Secretoglobin family 1C member 1 (94 aa).

A signal peptide spans 1 to 22; the sequence is MKGSSALLVALTVLCICGLTRA.

The protein belongs to the secretoglobin family. As to expression, expressed in the olfactory mucosa.

The protein resides in the secreted. The protein is Secretoglobin family 1C member 1 (Scgb1c1) of Rattus norvegicus (Rat).